The following is a 94-amino-acid chain: Putative pterin-4-alpha-carbinolamine dehydratase (94 aa).

The protein belongs to the pterin-4-alpha-carbinolamine dehydratase family.

It carries out the reaction (4aS,6R)-4a-hydroxy-L-erythro-5,6,7,8-tetrahydrobiopterin = (6R)-L-erythro-6,7-dihydrobiopterin + H2O. The polypeptide is Putative pterin-4-alpha-carbinolamine dehydratase (Mycobacteroides abscessus (strain ATCC 19977 / DSM 44196 / CCUG 20993 / CIP 104536 / JCM 13569 / NCTC 13031 / TMC 1543 / L948) (Mycobacterium abscessus)).